Consider the following 225-residue polypeptide: Biosynthetic peptidoglycan transglycosylase (225 aa).

A helical membrane pass occupies residues 12–32; it reads IWFVAWRFLLLFVIVLFLFRF.

Belongs to the glycosyltransferase 51 family.

It localises to the cell inner membrane. The enzyme catalyses [GlcNAc-(1-&gt;4)-Mur2Ac(oyl-L-Ala-gamma-D-Glu-L-Lys-D-Ala-D-Ala)](n)-di-trans,octa-cis-undecaprenyl diphosphate + beta-D-GlcNAc-(1-&gt;4)-Mur2Ac(oyl-L-Ala-gamma-D-Glu-L-Lys-D-Ala-D-Ala)-di-trans,octa-cis-undecaprenyl diphosphate = [GlcNAc-(1-&gt;4)-Mur2Ac(oyl-L-Ala-gamma-D-Glu-L-Lys-D-Ala-D-Ala)](n+1)-di-trans,octa-cis-undecaprenyl diphosphate + di-trans,octa-cis-undecaprenyl diphosphate + H(+). Its pathway is cell wall biogenesis; peptidoglycan biosynthesis. Peptidoglycan polymerase that catalyzes glycan chain elongation from lipid-linked precursors. This Marinomonas sp. (strain MWYL1) protein is Biosynthetic peptidoglycan transglycosylase.